The sequence spans 450 residues: Keratin, type I cytoskeletal 25 (450 aa).

The disordered stretch occupies residues 1-24 (MSLRLPSGSRRAGPRPTTGSLRLS). Residues 1 to 78 (MSLRLPSGSR…MNEGGLLSGN (78 aa)) are head. Positions 79-114 (EKVTMQNLNDRLASYLENVRALEEANADLEQKIKGW) are coil 1A. One can recognise an IF rod domain in the interval 79–394 (EKVTMQNLND…LLIGGDDGAC (316 aa)). The interval 115-136 (YEKFGPGSCRGLDHDYSRYLPI) is linker 1. Residues 137–228 (IEDLKNQIIA…KNHKEEMQVL (92 aa)) are coil 1B. A linker 12 region spans residues 229 to 251 (QCAAGGNVNVEMNAAPGVDLTVL). Positions 252–390 (LNNMRAEYEA…ETYCLLIGGD (139 aa)) are coil 2. Residues 391–450 (DGACKSGGYKSKDYAAGNMGNQMKDPIRAIVVKKVLEEVDQRSKVLTTRLHSLEEKSQSN) form a tail region. At Ser442 the chain carries Phosphoserine.

Belongs to the intermediate filament family. As to quaternary structure, heterodimer of a type I and a type II keratin. Heterodimer with type II keratin KRT5 leading to the formation of keratin intermediate filament (KIF) network. Interacts with KRT6A to form filaments. In terms of tissue distribution, expressed in skin and wool follicle. Expression localized to the inner root sheath of wool follicle.

Its subcellular location is the cytoplasm. Functionally, essential for the proper assembly of type I and type II keratin protein complexes and formation of keratin intermediate filaments in the inner root sheath (irs). Plays a role in the cytoskeleton organization. This is Keratin, type I cytoskeletal 25 from Ovis aries (Sheep).